The sequence spans 295 residues: G1/S-specific cyclin-D1 (295 aa).

One can recognise a Cyclin N-terminal domain in the interval L28–L152. The tract at residues A262–I295 is disordered. K269 is covalently cross-linked (Glycyl lysine isopeptide (Lys-Gly) (interchain with G-Cter in ubiquitin)). Residues E272–D282 are compositionally biased toward acidic residues. The residue at position 286 (T286) is a Phosphothreonine.

It belongs to the cyclin family. Cyclin D subfamily. Interacts with either CDK4 or CDK6 protein kinase to form a serine/threonine kinase holoenzyme complex. The cyclin subunit imparts substrate specificity to the complex. Component of the ternary complex CCND1/CDK4/CDKN1B required for nuclear translocation and modulation of CDK4-mediated kinase activity. Interacts directly with CDKN1B. Can form similar complexes with either CDKN1A or CDKN2A. Interacts with UHRF2; the interaction ubiquitinates CCND1 and appears to occur independently of phosphorylation. Interacts with USP2. Interacts (via cyclin N-terminal domain) with INSM1 (via N-terminal region); the interaction competes with the binding of CCND1 to CDK4 during cell cycle progression and inhibits CDK4 activity. Interacts with CDK4; the interaction is prevented with the binding of CCND1 to INSM1 during cell cycle progression. In terms of processing, phosphorylation at Thr-286 by MAP kinases is required for ubiquitination and degradation by the DCX(AMBRA1) complex. It also plays an essential role for recognition by the FBXO31 component of SCF (SKP1-cullin-F-box) protein ligase complex following DNA damage. Post-translationally, ubiquitinated at Lys-269 by the DCX(AMBRA1) complex during the transition from G1 to S cell phase, leading to its degradation: ubiquitination is dependent on Thr-286 phosphorylation. The DCX(AMBRA1) complex represents the major regulator of CCND1 stability during the G1/S transition. Also ubiquitinated by the SCF(FBXO4) and Cul7-RING(FBXW8) ubiquitin-protein ligase complexes. Following DNA damage it is ubiquitinated by the SCF(FBXO31) protein ligase complex. SCF(FBXO31) ubiquitination is dependent on Thr-286 phosphorylation. Ubiquitinated also by UHRF2 apparently in a phosphorylation-independent manner. Ubiquitination leads to its degradation and G1 arrest. Deubiquitinated by USP2; leading to its stabilization.

Its subcellular location is the nucleus. It is found in the cytoplasm. It localises to the nucleus membrane. Its function is as follows. Regulatory component of the cyclin D1-CDK4 (DC) complex that phosphorylates and inhibits members of the retinoblastoma (RB) protein family including RB1 and regulates the cell-cycle during G(1)/S transition. Phosphorylation of RB1 allows dissociation of the transcription factor E2F from the RB/E2F complex and the subsequent transcription of E2F target genes which are responsible for the progression through the G(1) phase. Hypophosphorylates RB1 in early G(1) phase. Cyclin D-CDK4 complexes are major integrators of various mitogenenic and antimitogenic signals. Also a substrate for SMAD3, phosphorylating SMAD3 in a cell-cycle-dependent manner and repressing its transcriptional activity. Component of the ternary complex, cyclin D1/CDK4/CDKN1B, required for nuclear translocation and activity of the cyclin D-CDK4 complex. Exhibits transcriptional corepressor activity with INSM1 on the NEUROD1 and INS promoters in a cell cycle-independent manner. In Homo sapiens (Human), this protein is G1/S-specific cyclin-D1.